The primary structure comprises 73 residues: Omega-hexatoxin-Ar1b (73 aa).

Positions 1–22 are cleaved as a signal peptide; it reads MNTATGFIVLLVLATVLGCIEA. A propeptide spanning residues 23 to 37 is cleaved from the precursor; that stretch reads GESHVREDAMGRARR. 3 disulfides stabilise this stretch: C40–C54, C47–C58, and C53–C72.

The protein belongs to the neurotoxin 08 (Shiva) family. 01 (omega toxin) subfamily. In terms of tissue distribution, expressed by the venom gland.

The protein resides in the secreted. Insecticidal toxin that reversibly and voltage-independently blocks both mid-low- (M-LVA) and high-voltage-activated (HVA) calcium channels (Cav) in cockroach DUM neurons. Also causes a modest block of insect sodium channel currents (Nav). Induces potent excitatory symptoms, followed by flaccid paralysis leading to death in house crickets. This Atrax robustus (Sydney funnel-web spider) protein is Omega-hexatoxin-Ar1b.